The following is a 503-amino-acid chain: Aromatase (503 aa).

The helical transmembrane segment at 21–41 (VTVSAMPLLLIMGLLLLIWNC) threads the bilayer. Aspartate 309 and methionine 374 together coordinate substrate. Cysteine 437 serves as a coordination point for heme.

Belongs to the cytochrome P450 family. Requires heme as cofactor.

It localises to the endoplasmic reticulum membrane. It is found in the microsome membrane. The enzyme catalyses testosterone + 3 reduced [NADPH--hemoprotein reductase] + 3 O2 = 17beta-estradiol + formate + 3 oxidized [NADPH--hemoprotein reductase] + 4 H2O + 4 H(+). It carries out the reaction androst-4-ene-3,17-dione + 3 reduced [NADPH--hemoprotein reductase] + 3 O2 = estrone + formate + 3 oxidized [NADPH--hemoprotein reductase] + 4 H2O + 4 H(+). It catalyses the reaction androst-4-ene-3,17-dione + reduced [NADPH--hemoprotein reductase] + O2 = 19-hydroxyandrost-4-ene-3,17-dione + oxidized [NADPH--hemoprotein reductase] + H2O + H(+). The catalysed reaction is 19-hydroxyandrost-4-ene-3,17-dione + reduced [NADPH--hemoprotein reductase] + O2 = 19-oxo-androst-4-ene-3,17-dione + oxidized [NADPH--hemoprotein reductase] + 2 H2O + H(+). The enzyme catalyses 19-oxo-androst-4-ene-3,17-dione + reduced [NADPH--hemoprotein reductase] + O2 = estrone + formate + oxidized [NADPH--hemoprotein reductase] + H2O + 2 H(+). It carries out the reaction estrone + reduced [NADPH--hemoprotein reductase] + O2 = 2-hydroxyestrone + oxidized [NADPH--hemoprotein reductase] + H2O + H(+). It catalyses the reaction 17beta-hydroxy-5alpha-androstan-3-one + reduced [NADPH--hemoprotein reductase] + O2 = 17beta,19-dihydroxy-3-oxo-5alpha-androstanone + oxidized [NADPH--hemoprotein reductase] + H2O + H(+). The catalysed reaction is 17beta,19-dihydroxy-3-oxo-5alpha-androstanone + reduced [NADPH--hemoprotein reductase] + O2 = 17beta-hydroxy-3,19-dioxo-5alpha-androstanone + oxidized [NADPH--hemoprotein reductase] + 2 H2O + H(+). The enzyme catalyses 17beta-hydroxy-3,19-dioxo-5alpha-androstanone + reduced [NADPH--hemoprotein reductase] + O2 = 17beta-hydroxy-3-oxo-19-nor-5alpha-androst-1-ene + formate + oxidized [NADPH--hemoprotein reductase] + H2O + 2 H(+). It functions in the pathway steroid hormone biosynthesis. In terms of biological role, a cytochrome P450 monooxygenase that catalyzes the conversion of C19 androgens, androst-4-ene-3,17-dione (androstenedione) and testosterone to the C18 estrogens, estrone and estradiol, respectively. Catalyzes three successive oxidations of C19 androgens: two conventional oxidations at C19 yielding 19-hydroxy and 19-oxo/19-aldehyde derivatives, followed by a third oxidative aromatization step that involves C1-beta hydrogen abstraction combined with cleavage of the C10-C19 bond to yield a phenolic A ring and formic acid. Alternatively, the third oxidative reaction yields a 19-norsteroid and formic acid. Converts dihydrotestosterone to delta1,10-dehydro 19-nordihydrotestosterone and may play a role in homeostasis of this potent androgen. Also displays 2-hydroxylase activity toward estrone. Mechanistically, uses molecular oxygen inserting one oxygen atom into a substrate, and reducing the second into a water molecule, with two electrons provided by NADPH via cytochrome P450 reductase (CPR; NADPH-ferrihemoprotein reductase). This is Aromatase (Cyp19a1) from Mus musculus (Mouse).